The following is a 79-amino-acid chain: Acyl carrier protein (79 aa).

Positions Ser2–Leu77 constitute a Carrier domain. Ser37 is subject to O-(pantetheine 4'-phosphoryl)serine.

It belongs to the acyl carrier protein (ACP) family. 4'-phosphopantetheine is transferred from CoA to a specific serine of apo-ACP by AcpS. This modification is essential for activity because fatty acids are bound in thioester linkage to the sulfhydryl of the prosthetic group.

The protein localises to the cytoplasm. The protein operates within lipid metabolism; fatty acid biosynthesis. In terms of biological role, carrier of the growing fatty acid chain in fatty acid biosynthesis. The polypeptide is Acyl carrier protein (Alkalilimnicola ehrlichii (strain ATCC BAA-1101 / DSM 17681 / MLHE-1)).